The following is a 547-amino-acid chain: Putative HMP/thiamine import ATP-binding protein YkoD (547 aa).

2 consecutive ABC transporter domains span residues 8–250 and 295–523; these read LTVE…KLGI and LEVS…KAKL. Residues 42–49 and 327–334 contribute to the ATP site; these read GPSGCGKS and GPNGTGKS.

It belongs to the ABC transporter superfamily. In terms of assembly, the complex is composed of two ATP-binding proteins (YkoD), two transmembrane proteins (YkoC and YkoE) and a solute-binding protein (YkoF).

It is found in the cell membrane. Functionally, part of the ABC transporter complex YkoCDEF that could transport hydroxymethylpyrimidine (HMP) and/or thiamine. Could also transport other HMP-containing products. Responsible for energy coupling to the transport system. The sequence is that of Putative HMP/thiamine import ATP-binding protein YkoD (ykoD) from Bacillus subtilis (strain 168).